Consider the following 495-residue polypeptide: Ribosome biogenesis protein YTM1 (495 aa).

The segment at 15-97 (VKVIFTTTEP…ETTLTLQYVR (83 aa)) is ubiquitin-like (UBL) domain. WD repeat units lie at residues 129–168 (WSSA…IATS), 175–213 (GHTA…HFTG), 223–262 (GHTG…APEP), 264–295 (ASLL…LWSI), 296–337 (HTAP…STLT), 386–426 (GHAN…PATK), and 458–495 (GDGC…TEQK).

This sequence belongs to the WD repeat WDR12/YTM1 family. In terms of assembly, component of the NOP7 complex, composed of ERB1, NOP7 and YTM1. The complex is held together by ERB1, which interacts with NOP7 via its N-terminal domain and with YTM1 via a high-affinity interaction between the seven-bladed beta-propeller domains of the 2 proteins. The NOP7 complex associates with the 66S pre-ribosome. Interacts (via UBL domain) with MDN1 (via VWFA/MIDAS domain).

The protein resides in the nucleus. Its subcellular location is the nucleolus. The protein localises to the nucleoplasm. Its function is as follows. Component of the NOP7 complex, which is required for maturation of the 25S and 5.8S ribosomal RNAs and formation of the 60S ribosome. The sequence is that of Ribosome biogenesis protein YTM1 from Chaetomium thermophilum (strain DSM 1495 / CBS 144.50 / IMI 039719) (Thermochaetoides thermophila).